The chain runs to 155 residues: Ribosomal RNA large subunit methyltransferase H (155 aa).

S-adenosyl-L-methionine-binding positions include leucine 73, glycine 104, and 123-128; that span reads LSPLTL.

It belongs to the RNA methyltransferase RlmH family. Homodimer.

It localises to the cytoplasm. The enzyme catalyses pseudouridine(1915) in 23S rRNA + S-adenosyl-L-methionine = N(3)-methylpseudouridine(1915) in 23S rRNA + S-adenosyl-L-homocysteine + H(+). Its function is as follows. Specifically methylates the pseudouridine at position 1915 (m3Psi1915) in 23S rRNA. In Pseudomonas putida (strain ATCC 700007 / DSM 6899 / JCM 31910 / BCRC 17059 / LMG 24140 / F1), this protein is Ribosomal RNA large subunit methyltransferase H.